Here is a 208-residue protein sequence, read N- to C-terminus: Sodium/potassium-transporting ATPase subunit beta-1-interacting protein 4 (208 aa).

4 consecutive transmembrane segments (helical) span residues 10-30 (LILLCTLQLVAALERQVFDFL), 35-55 (APILANFLHIVATILGLFGTL), 62-82 (VIAYALWAAVWVTWNVFLICF), and 151-171 (ALQILLALLGFVYACYVTSVF).

This sequence belongs to the NKAIN family. In terms of assembly, interacts with atp1b1 C-terminus.

It localises to the cell membrane. The sequence is that of Sodium/potassium-transporting ATPase subunit beta-1-interacting protein 4 (nkain4) from Xenopus tropicalis (Western clawed frog).